A 625-amino-acid polypeptide reads, in one-letter code: Putative xanthine/uracil permease C887.17 (625 aa).

Transmembrane regions (helical) follow at residues 49 to 69 (AGLT…TILV), 107 to 127 (AAIS…PVGM), 154 to 174 (EALL…VIGL), 192 to 212 (AGIG…LGVI), 246 to 263 (MWVG…LMMY), 328 to 348 (FAIA…GTLY), 369 to 389 (VAYI…CSPV), 406 to 426 (GILG…APIF), 429 to 449 (IPVW…MKST), and 465 to 485 (ITIA…AGII). The tract at residues 595-625 (EAVGESESFSNRQQDFRTPYAGIDMDTDDRI) is disordered.

The protein belongs to the nucleobase:cation symporter-2 (NCS2) (TC 2.A.40) family. Azg-like subfamily.

It localises to the golgi apparatus membrane. This is Putative xanthine/uracil permease C887.17 from Schizosaccharomyces pombe (strain 972 / ATCC 24843) (Fission yeast).